Reading from the N-terminus, the 411-residue chain is Translation initiation factor 2 subunit gamma (411 aa).

In terms of domain architecture, tr-type G spans 9-201; the sequence is QPSVNIGMVG…AIEKYIPSPK (193 aa). Residues 18–25 form a G1 region; the sequence is GHVDHGKS. Residues Asp21, Ser25, Gly46, and Ser48 each contribute to the Mg(2+) site. 21-26 lines the GTP pocket; sequence DHGKST. The interval 46 to 50 is G2; that stretch reads GISIK. Residues 88–91 form a G3 region; the sequence is DAPG. Residues 144–147 and 179–181 contribute to the GTP site; these read NKID and SAY. The tract at residues 144–147 is G4; sequence NKID. Residues 179 to 181 form a G5 region; the sequence is SAY.

It belongs to the TRAFAC class translation factor GTPase superfamily. Classic translation factor GTPase family. EIF2G subfamily. In terms of assembly, heterotrimer composed of an alpha, a beta and a gamma chain. The cofactor is Mg(2+).

It carries out the reaction GTP + H2O = GDP + phosphate + H(+). Its function is as follows. eIF-2 functions in the early steps of protein synthesis by forming a ternary complex with GTP and initiator tRNA. The sequence is that of Translation initiation factor 2 subunit gamma from Thermoplasma acidophilum (strain ATCC 25905 / DSM 1728 / JCM 9062 / NBRC 15155 / AMRC-C165).